The following is a 206-amino-acid chain: Ras-related protein Rab7 (206 aa).

Residues glycine 15–threonine 22, aspartate 63–glutamine 67, and asparagine 125–aspartate 128 contribute to the GTP site. 2 S-geranylgeranyl cysteine lipidation sites follow: cysteine 204 and cysteine 206. Residue cysteine 206 is modified to Cysteine methyl ester.

The protein belongs to the small GTPase superfamily. Rab family.

Its subcellular location is the cell membrane. Functionally, protein transport. Probably involved in vesicular traffic. This chain is Ras-related protein Rab7, found in Vigna aconitifolia (Moth bean).